Consider the following 332-residue polypeptide: Beta-ketoacyl-[acyl-carrier-protein] synthase III 5 (332 aa).

Residues C111 and H253 contribute to the active site. The tract at residues 254–258 is ACP-binding; sequence QANAR. The active site involves N283.

The protein belongs to the thiolase-like superfamily. FabH family. Homodimer.

Its subcellular location is the cytoplasm. The enzyme catalyses malonyl-[ACP] + acetyl-CoA + H(+) = 3-oxobutanoyl-[ACP] + CO2 + CoA. The protein operates within lipid metabolism; fatty acid biosynthesis. Its function is as follows. Catalyzes the condensation reaction of fatty acid synthesis by the addition to an acyl acceptor of two carbons from malonyl-ACP. Catalyzes the first condensation reaction which initiates fatty acid synthesis and may therefore play a role in governing the total rate of fatty acid production. Possesses both acetoacetyl-ACP synthase and acetyl transacylase activities. Its substrate specificity determines the biosynthesis of branched-chain and/or straight-chain of fatty acids. This Streptomyces coelicolor (strain ATCC BAA-471 / A3(2) / M145) protein is Beta-ketoacyl-[acyl-carrier-protein] synthase III 5.